The chain runs to 245 residues: Chymotrypsinogen A (245 aa).

5 disulfides stabilise this stretch: C1/C122, C42/C58, C136/C201, C168/C182, and C191/C220. A propeptide spanning residues 14 to 15 (SR) is cleaved from the precursor. In terms of domain architecture, Peptidase S1 spans 16 to 243 (IVNGEEAVPG…LVNWVQQTLA (228 aa)). Active-site charge relay system residues include H57 and D102. Residues 147–148 (TN) constitute a propeptide that is removed on maturation. S195 acts as the Charge relay system in catalysis.

This sequence belongs to the peptidase S1 family.

It localises to the secreted. Its subcellular location is the extracellular space. It carries out the reaction Preferential cleavage: Tyr-|-Xaa, Trp-|-Xaa, Phe-|-Xaa, Leu-|-Xaa.. This is Chymotrypsinogen A from Bos taurus (Bovine).